Reading from the N-terminus, the 310-residue chain is Acetylglutamate kinase (310 aa).

Substrate is bound by residues 70 to 71 (GG), Arg-92, and Asn-191.

It belongs to the acetylglutamate kinase family. ArgB subfamily.

It localises to the cytoplasm. It catalyses the reaction N-acetyl-L-glutamate + ATP = N-acetyl-L-glutamyl 5-phosphate + ADP. Its pathway is amino-acid biosynthesis; L-arginine biosynthesis; N(2)-acetyl-L-ornithine from L-glutamate: step 2/4. Catalyzes the ATP-dependent phosphorylation of N-acetyl-L-glutamate. In Corynebacterium diphtheriae (strain ATCC 700971 / NCTC 13129 / Biotype gravis), this protein is Acetylglutamate kinase.